The primary structure comprises 327 residues: Gonadotropin-releasing hormone receptor (327 aa).

Residues 1 to 38 (MANNASLEQDPNHCSAINNSIPLIQGKLPTLTVSGKIR) lie on the Extracellular side of the membrane. N-linked (GlcNAc...) asparagine glycans are attached at residues Asn-4 and Asn-18. A helical membrane pass occupies residues 39–58 (VTVTFFLFLLSTAFNASFLL). The Cytoplasmic segment spans residues 59–77 (KLQKWTQKRKKGKKLSRMK). Residues 78–97 (VLLKHLTLANLLETLIVMPL) traverse the membrane as a helical segment. Residues 98-115 (DGMWNITVQWYAGEFLCK) lie on the Extracellular side of the membrane. N-linked (GlcNAc...) asparagine glycosylation occurs at Asn-102. Cysteines 114 and 195 form a disulfide. The chain crosses the membrane as a helical span at residues 116 to 137 (VLSYLKLFSMYAPAFMMVVISL). At 138-164 (DRSLAITQPLAVQSNSKLEQSMISLAW) the chain is on the cytoplasmic side. A helical membrane pass occupies residues 165–184 (ILSIVFAGPQLYIFRMIYLA). The Extracellular portion of the chain corresponds to 185–211 (DGSGPTVFSQCVTHCSFPQWWHQAFYN). A helical membrane pass occupies residues 212 to 231 (FFTFGCLFIIPLLIMLICNA). The Cytoplasmic portion of the chain corresponds to 232-280 (KIIFALTRVLHQDPRKLQLNQSKNNIPRARLRTLKMTVAFATSFVVCWT). A helical membrane pass occupies residues 281 to 299 (PYYVLGIWYWFDPEMLNRV). Residues 300 to 305 (SEPVNH) lie on the Extracellular side of the membrane. Residues 306–325 (FFFLFAFLNPCFDPLIYGYF) form a helical membrane-spanning segment. Topologically, residues 326 to 327 (SL) are cytoplasmic.

This sequence belongs to the G-protein coupled receptor 1 family. In terms of tissue distribution, pituitary gland.

Its subcellular location is the cell membrane. In terms of biological role, receptor for gonadotropin releasing hormone (GnRH) that mediates the action of GnRH to stimulate the secretion of the gonadotropic hormones luteinizing hormone (LH) and follicle-stimulating hormone (FSH). This receptor mediates its action by association with G-proteins that activate a phosphatidylinositol-calcium second messenger system. This Mus musculus (Mouse) protein is Gonadotropin-releasing hormone receptor (Gnrhr).